The sequence spans 807 residues: G-type lectin S-receptor-like serine/threonine-protein kinase At1g61420 (807 aa).

Positions 1–24 (MGKKWIVFFAYLLLSSFFISSSSA) are cleaved as a signal peptide. Residues 25 to 144 (GITKESPLPI…FSGRTLWQSF (120 aa)) enclose the Bulb-type lectin domain. Topologically, residues 25-426 (GITKESPLPI…ELGGNKRKKA (402 aa)) are extracellular. N-linked (GlcNAc...) asparagine glycosylation is found at Asn53, Asn94, Asn117, Asn134, Asn236, and Asn267. In terms of domain architecture, EGF-like; atypical spans 278 to 314 (PEHSCDYYGVCGPFGLCVKSVPPKCTCFKGFVPKLIE). Cystine bridges form between Cys282–Cys294 and Cys288–Cys302. 3 N-linked (GlcNAc...) asparagine glycosylation sites follow: Asn320, Asn336, and Asn375. The PAN domain occupies 333-413 (CQGNSTGKYA…EGGELLSIRL (81 aa)). Intrachain disulfides connect Cys368/Cys389 and Cys372/Cys378. The chain crosses the membrane as a helical span at residues 427 to 447 (ITASIVSLSLVVIIAFVAFCF). Residues 448–807 (WRYRVKHNAD…EMTKSVILGR (360 aa)) lie on the Cytoplasmic side of the membrane. Residues 494-779 (FSISNKLGQG…DLPPPEQPTF (286 aa)) enclose the Protein kinase domain. ATP is bound by residues 500–508 (LGQGGFGPV) and Lys522. Ser528 and Ser543 each carry phosphoserine. Residues 583–600 (RKRLEIDWPKRLDIIQGI) form a caM-binding region. The Proton acceptor role is filled by Asp619. A phosphoserine mark is found at Ser623 and Ser636. Thr653 carries the phosphothreonine modification. Ser696 and Ser790 each carry phosphoserine.

Belongs to the protein kinase superfamily. Ser/Thr protein kinase family.

It is found in the cell membrane. It catalyses the reaction L-seryl-[protein] + ATP = O-phospho-L-seryl-[protein] + ADP + H(+). The enzyme catalyses L-threonyl-[protein] + ATP = O-phospho-L-threonyl-[protein] + ADP + H(+). The chain is G-type lectin S-receptor-like serine/threonine-protein kinase At1g61420 from Arabidopsis thaliana (Mouse-ear cress).